We begin with the raw amino-acid sequence, 307 residues long: Glycine--tRNA ligase alpha subunit (307 aa).

It belongs to the class-II aminoacyl-tRNA synthetase family. Tetramer of two alpha and two beta subunits.

The protein localises to the cytoplasm. The catalysed reaction is tRNA(Gly) + glycine + ATP = glycyl-tRNA(Gly) + AMP + diphosphate. The sequence is that of Glycine--tRNA ligase alpha subunit (glyQ) from Xylella fastidiosa (strain 9a5c).